The following is a 422-amino-acid chain: UDP-N-acetylglucosamine 1-carboxyvinyltransferase (422 aa).

22–23 (KN) contributes to the phosphoenolpyruvate binding site. Arginine 93 serves as a coordination point for UDP-N-acetyl-alpha-D-glucosamine. Residue cysteine 117 is the Proton donor of the active site. Cysteine 117 carries the post-translational modification 2-(S-cysteinyl)pyruvic acid O-phosphothioketal. UDP-N-acetyl-alpha-D-glucosamine contacts are provided by residues 122–126 (RPVDL), aspartate 308, and leucine 330.

This sequence belongs to the EPSP synthase family. MurA subfamily.

Its subcellular location is the cytoplasm. It catalyses the reaction phosphoenolpyruvate + UDP-N-acetyl-alpha-D-glucosamine = UDP-N-acetyl-3-O-(1-carboxyvinyl)-alpha-D-glucosamine + phosphate. It functions in the pathway cell wall biogenesis; peptidoglycan biosynthesis. In terms of biological role, cell wall formation. Adds enolpyruvyl to UDP-N-acetylglucosamine. The chain is UDP-N-acetylglucosamine 1-carboxyvinyltransferase from Helicobacter pylori (strain P12).